We begin with the raw amino-acid sequence, 730 residues long: Synaptotagmin-like protein 5 (730 aa).

The 117-residue stretch at 7 to 123 folds into the RabBD domain; sequence FINLSFLLDH…IITGEWFFEE (117 aa). The FYVE-type zinc-finger motif lies at 64-106; that stretch reads CVHCHRNLGLIFDRGDPCQACSLRVCRECRVAGPNGSWKCTVC. Serine 147 is modified (phosphoserine). Disordered stretches follow at residues 147–188, 217–271, and 294–355; these read SPGA…GFLL, QHFR…TRTV, and SQEL…LDKD. Composition is skewed to polar residues over residues 248-271 and 305-322; these read PKSS…TRTV and TSGT…SSDQ. C2 domains follow at residues 406 to 527 and 563 to 694; these read VSGE…DEWF and PPEQ…VDWM.

In terms of assembly, binds RAB27A that has been activated by GTP-binding, and possibly also RAB3A and RAB6A. As to expression, highly expressed in placenta and liver.

Its subcellular location is the membrane. In terms of biological role, may act as Rab effector protein and play a role in vesicle trafficking. Binds phospholipids. The chain is Synaptotagmin-like protein 5 (SYTL5) from Homo sapiens (Human).